The chain runs to 210 residues: Putative RING-H2 finger protein ATL50 (210 aa).

The helical transmembrane segment at 35 to 55 (IVLLYITLLSIIFFVAALIHL) threads the bilayer. The RING-type; atypical zinc-finger motif lies at 122 to 164 (CAVCLREFTAEDELRLLPKCSHAFHVECIDTWLLTNSTCPLCR). A disordered region spans residues 187 to 210 (SDGDNSQDSDSSFMLTDLDDVESK).

It belongs to the RING-type zinc finger family. ATL subfamily.

The protein localises to the membrane. It catalyses the reaction S-ubiquitinyl-[E2 ubiquitin-conjugating enzyme]-L-cysteine + [acceptor protein]-L-lysine = [E2 ubiquitin-conjugating enzyme]-L-cysteine + N(6)-ubiquitinyl-[acceptor protein]-L-lysine.. It functions in the pathway protein modification; protein ubiquitination. This is Putative RING-H2 finger protein ATL50 (ATL50) from Arabidopsis thaliana (Mouse-ear cress).